We begin with the raw amino-acid sequence, 314 residues long: DNA topoisomerase I (314 aa).

The Topo IB-type catalytic domain maps to 77-314 (IQNRNAKRDR…VDHVKSSTDG (238 aa)). Tyrosine 274 (O-(3'-phospho-DNA)-tyrosine intermediate) is an active-site residue.

The protein belongs to the type IB topoisomerase family.

It localises to the virion. It carries out the reaction ATP-independent breakage of single-stranded DNA, followed by passage and rejoining.. In terms of biological role, releases the supercoiling and torsional tension of DNA introduced during the DNA replication and transcription by transiently cleaving and rejoining one strand of the DNA duplex. Introduces a single-strand break via transesterification at the specific target site 5'-[CT]CCTTp site in duplex DNA. The scissile phosphodiester is attacked by the catalytic tyrosine of the enzyme, resulting in the formation of a DNA-(3'-phosphotyrosyl)-enzyme intermediate and the expulsion of a 5'-OH DNA strand. The free DNA strand then undergoes passage around the unbroken strand thus removing DNA supercoils. Finally, in the religation step, the DNA 5'-OH attacks the covalent intermediate to expel the active-site tyrosine and restore the DNA phosphodiester backbone. This is DNA topoisomerase I (OPG111) from Cynomys gunnisoni (Gunnison's prairie dog).